Consider the following 266-residue polypeptide: Small ribosomal subunit protein uS2 (266 aa).

Residues 238 to 266 (EFASAPDAGKKGRQAQPKKGKRASDAAAE) form a disordered region. Residues 248–258 (KGRQAQPKKGK) show a composition bias toward basic residues.

It belongs to the universal ribosomal protein uS2 family.

This chain is Small ribosomal subunit protein uS2, found in Xylella fastidiosa (strain M12).